The chain runs to 348 residues: Protein arginine N-methyltransferase 1 (348 aa).

The SAM-dependent MTase PRMT-type domain maps to 20–322 (EQHYFNSYDH…EKNNRDLNIK (303 aa)). 5 residues coordinate S-adenosyl-L-methionine: His33, Arg42, Gly66, Asp88, and Glu117. Catalysis depends on residues Glu132 and Glu141.

It belongs to the class I-like SAM-binding methyltransferase superfamily. Protein arginine N-methyltransferase family. In terms of assembly, homodimer. The dimers can then associate to form a ring-shaped homohexamer. Interacts with NPL3, BRE5, MTR4, SNF2, SUM1, and SSD1.

The protein resides in the nucleus. It catalyses the reaction L-arginyl-[protein] + S-adenosyl-L-methionine = N(omega)-methyl-L-arginyl-[protein] + S-adenosyl-L-homocysteine + H(+). It carries out the reaction L-arginyl-[protein] + 2 S-adenosyl-L-methionine = N(omega),N(omega)-dimethyl-L-arginyl-[protein] + 2 S-adenosyl-L-homocysteine + 2 H(+). Functionally, S-adenosyl-L-methionine-dependent protein-arginine N-methyltransferase that catalyzes both the mono- and asymmetric (type I) dimethylation of the guanidino nitrogens of arginine residues in a variety of RNA-binding proteins such as heterogeneous nuclear ribonucleoproteins (hnRNPs) and small nuclear ribonucleoproteins (snRNPs). Methylates NAB2, NPL3, HRP1 and YRA1, shuttling hnRNPs involved in mRNA processing and export, facilitating their export out of the nucleus. Methylation of NPL3 weakens its interaction with THO2, a component of the TREX (transcription/export) complex important for transcriptional elongation and recruitment of mRNA export factors. Methylates the hnRNP HRB1, but does not influence its subcellular location. Methylates the nucleolar proteins GAR1, NOP1 and NSR1. Methylates the snRNP SNP1 and modulates the cotranscriptional recruitment of splicing factors. Dimethylates free histone H4 (HHF1/HHF2) at 'Arg-4' (H4R3me2a) and plays a role in preservation and establishment of silent chromatin domains. Mono- and dimethylates ribosomal protein S2 (RPS2) at 'Arg-11'. Methylates the catalytic subunit of the SWI/SNF chromatin-remodeling complex SNF2. The chain is Protein arginine N-methyltransferase 1 from Saccharomyces cerevisiae (strain ATCC 204508 / S288c) (Baker's yeast).